A 211-amino-acid chain; its full sequence is SsrA-binding protein (211 aa).

The interval 168–211 (KHRLRRPRAQRNTQRSVTPRRTRENKNVRGSKARSARRNVRREN) is disordered. Positions 177-186 (QRNTQRSVTP) are enriched in polar residues. Positions 196-211 (RGSKARSARRNVRREN) are enriched in basic residues.

This sequence belongs to the SmpB family.

It is found in the cytoplasm. Required for rescue of stalled ribosomes mediated by trans-translation. Binds to transfer-messenger RNA (tmRNA), required for stable association of tmRNA with ribosomes. tmRNA and SmpB together mimic tRNA shape, replacing the anticodon stem-loop with SmpB. tmRNA is encoded by the ssrA gene; the 2 termini fold to resemble tRNA(Ala) and it encodes a 'tag peptide', a short internal open reading frame. During trans-translation Ala-aminoacylated tmRNA acts like a tRNA, entering the A-site of stalled ribosomes, displacing the stalled mRNA. The ribosome then switches to translate the ORF on the tmRNA; the nascent peptide is terminated with the 'tag peptide' encoded by the tmRNA and targeted for degradation. The ribosome is freed to recommence translation, which seems to be the essential function of trans-translation. This chain is SsrA-binding protein, found in Tropheryma whipplei (strain Twist) (Whipple's bacillus).